Consider the following 77-residue polypeptide: Epoxide hydrolase (77 aa).

In terms of assembly, monomer.

The catalysed reaction is an epoxide + H2O = an ethanediol. Functionally, this enzyme acts on aliphatic epoxides. Its substrates include epichlorohydrin, epibromohydrin, epoxyoctane and styrene epoxide. The chain is Epoxide hydrolase from Pseudomonas sp. (strain AD1).